Reading from the N-terminus, the 521-residue chain is Lymphocyte activation gene 3 protein (521 aa).

The first 23 residues, 1-23 (MREDLLLGFLLLGLLWEAPVVSS), serve as a signal peptide directing secretion. Topologically, residues 24 to 442 (GPGKELPVVW…ISGDLKGGHL (419 aa)) are extracellular. The Ig-like V-type domain occupies 37 to 163 (GAPVHLPCSL…LSCSLRLRVG (127 aa)). The segment at 37–246 (GAPVHLPCSL…LTYRDGFNVS (210 aa)) is interaction with FGL1. C44 and C156 are joined by a disulfide. 3 Ig-like C2-type domains span residues 165–246 (ASMI…FNVS), 258–341 (PVAP…ATVT), and 345–412 (ITVT…EGQR). An N-linked (GlcNAc...) asparagine glycan is attached at N184. C185 and C235 are joined by a disulfide. N-linked (GlcNAc...) asparagine glycosylation is found at N244, N309, N337, and N381. C276 and C327 are joined by a disulfide. The cysteines at positions 363 and 405 are disulfide-linked. Residues 422–442 (ESSSGAHSARRISGDLKGGHL) form a connecting peptide region. Residues 443–463 (VLVLILGALSLFLLVAGAFGF) form a helical membrane-spanning segment. Topologically, residues 464 to 521 (HWWRKQLLLRRFSALEHGIQPFPAQRKIEELERELETEMGQEPEPEPEPQLEPEPRQL) are cytoplasmic. A KIEELE motif motif is present at residues 490 to 495 (KIEELE). The tract at residues 493–518 (ELERELETEMGQEPEPEPEPQLEPEP) is 13 X 2 AA tandem repeats of E-X. The interval 493 to 521 (ELERELETEMGQEPEPEPEPQLEPEPRQL) is disordered. The span at 500–514 (TEMGQEPEPEPEPQL) shows a compositional bias: acidic residues.

It belongs to the LAG3 family. Interacts with MHC class II (MHC-II); selectively recognizes stable complexes of peptide and MHC-II. Interacts with FGL1 (via the Fibrinogen C-terminal domain). Post-translationally, proteolytically cleaved by ADAM10 and ADAM17 within the connecting peptide region, leading to release of Secreted lymphocyte activation gene 3 protein (sLAG-3). ADAM10 mediates constitutive cleavage, but cleavage increases following T-cell activation, whereas shedding by ADAM17 is induced by TCR signaling in a PRKCQ-dependent manner. As to expression, primarily expressed in activated CD4(+) and CD8(+) T-cells. Also expressed in a subset of regulatory T-cells (Tregs), such as natural CD4(+)CD25(+) Tregs. Also expressed on plasmacytoid dendritic cells (pDCs).

It localises to the cell membrane. It is found in the secreted. Its function is as follows. Lymphocyte activation gene 3 protein: Inhibitory receptor on antigen activated T-cells. Delivers inhibitory signals upon binding to ligands, such as FGL1. FGL1 constitutes a major ligand of LAG3 and is responsible for LAG3 T-cell inhibitory function. Following TCR engagement, LAG3 associates with CD3-TCR in the immunological synapse and directly inhibits T-cell activation. May inhibit antigen-specific T-cell activation in synergy with PDCD1/PD-1, possibly by acting as a coreceptor for PDCD1/PD-1. Negatively regulates the proliferation, activation, effector function and homeostasis of both CD8(+) and CD4(+) T-cells. Also mediates immune tolerance: constitutively expressed on a subset of regulatory T-cells (Tregs) and contributes to their suppressive function. Also acts as a negative regulator of plasmacytoid dendritic cell (pDCs) activation. Binds MHC class II (MHC-II); the precise role of MHC-II-binding is however unclear. Functionally, may function as a ligand for MHC class II (MHC-II) on antigen-presenting cells (APC), promoting APC activation/maturation and driving Th1 immune response. This chain is Lymphocyte activation gene 3 protein, found in Mus musculus (Mouse).